We begin with the raw amino-acid sequence, 380 residues long: Cytochrome b (380 aa).

4 helical membrane-spanning segments follow: residues 34–54 (FGSL…LLAM), 78–99 (WLIR…FLHI), 114–134 (WNTG…GYVL), and 179–199 (FFAL…THLM). Positions 84 and 98 each coordinate heme b. Heme b is bound by residues histidine 183 and histidine 197. Residue histidine 202 coordinates a ubiquinone. 4 helical membrane passes run 227 to 247 (LKDI…ALFS), 289 to 309 (LGGV…PFLH), 321 to 341 (LSQA…WVGS), and 348 to 368 (FIII…ILFP).

The protein belongs to the cytochrome b family. As to quaternary structure, the cytochrome bc1 complex contains 11 subunits: 3 respiratory subunits (MT-CYB, CYC1 and UQCRFS1), 2 core proteins (UQCRC1 and UQCRC2) and 6 low-molecular weight proteins (UQCRH/QCR6, UQCRB/QCR7, UQCRQ/QCR8, UQCR10/QCR9, UQCR11/QCR10 and a cleavage product of UQCRFS1). This cytochrome bc1 complex then forms a dimer. The cofactor is heme b.

The protein resides in the mitochondrion inner membrane. Its function is as follows. Component of the ubiquinol-cytochrome c reductase complex (complex III or cytochrome b-c1 complex) that is part of the mitochondrial respiratory chain. The b-c1 complex mediates electron transfer from ubiquinol to cytochrome c. Contributes to the generation of a proton gradient across the mitochondrial membrane that is then used for ATP synthesis. The sequence is that of Cytochrome b (MT-CYB) from Syrmaticus reevesii (Reeves's pheasant).